Here is a 283-residue protein sequence, read N- to C-terminus: Dihydropteroate synthase (283 aa).

One can recognise a Pterin-binding domain in the interval 18 to 274; sequence PKIMGIVNLT…DVKATADALK (257 aa). Asn25 serves as a coordination point for Mg(2+). (7,8-dihydropterin-6-yl)methyl diphosphate is bound by residues Thr66, Asp99, Asn119, Asp190, Lys227, and 262–264; that span reads RVH.

The protein belongs to the DHPS family. In terms of assembly, homodimer. It depends on Mg(2+) as a cofactor.

The catalysed reaction is (7,8-dihydropterin-6-yl)methyl diphosphate + 4-aminobenzoate = 7,8-dihydropteroate + diphosphate. It participates in cofactor biosynthesis; tetrahydrofolate biosynthesis; 7,8-dihydrofolate from 2-amino-4-hydroxy-6-hydroxymethyl-7,8-dihydropteridine diphosphate and 4-aminobenzoate: step 1/2. In terms of biological role, catalyzes the condensation of para-aminobenzoate (pABA) with 6-hydroxymethyl-7,8-dihydropterin diphosphate (DHPt-PP) to form 7,8-dihydropteroate (H2Pte), the immediate precursor of folate derivatives. The chain is Dihydropteroate synthase (folP) from Neisseria meningitidis serogroup C.